Reading from the N-terminus, the 164-residue chain is Mediator of RNA polymerase II transcription subunit 21 (164 aa).

Positions 49-81 (APLPANQTQQGSTLGSNRQTVSPSTQAEAESNF) are disordered. The segment covering 53–81 (ANQTQQGSTLGSNRQTVSPSTQAEAESNF) has biased composition (polar residues). The stretch at 114-146 (ESQLKIIDDLSKELQSVEQEQVKKIQEKDKLLK) forms a coiled coil.

Belongs to the Mediator complex subunit 21 family. As to quaternary structure, component of the Mediator complex.

Its subcellular location is the nucleus. Its function is as follows. Component of the Mediator complex, a coactivator involved in the regulated transcription of nearly all RNA polymerase II-dependent genes. Mediator functions as a bridge to convey information from gene-specific regulatory proteins to the basal RNA polymerase II transcription machinery. Mediator is recruited to promoters by direct interactions with regulatory proteins and serves as a scaffold for the assembly of a functional preinitiation complex with RNA polymerase II and the general transcription factors. The polypeptide is Mediator of RNA polymerase II transcription subunit 21 (SRB7) (Scheffersomyces stipitis (strain ATCC 58785 / CBS 6054 / NBRC 10063 / NRRL Y-11545) (Yeast)).